Consider the following 254-residue polypeptide: Phosphoribosylaminoimidazole-succinocarboxamide synthase (254 aa).

This sequence belongs to the SAICAR synthetase family.

It catalyses the reaction 5-amino-1-(5-phospho-D-ribosyl)imidazole-4-carboxylate + L-aspartate + ATP = (2S)-2-[5-amino-1-(5-phospho-beta-D-ribosyl)imidazole-4-carboxamido]succinate + ADP + phosphate + 2 H(+). It functions in the pathway purine metabolism; IMP biosynthesis via de novo pathway; 5-amino-1-(5-phospho-D-ribosyl)imidazole-4-carboxamide from 5-amino-1-(5-phospho-D-ribosyl)imidazole-4-carboxylate: step 1/2. This chain is Phosphoribosylaminoimidazole-succinocarboxamide synthase, found in Sinorhizobium medicae (strain WSM419) (Ensifer medicae).